The chain runs to 518 residues: D-aminopeptidase (518 aa).

Ser-62 serves as the catalytic Nucleophile. Lys-65 serves as the catalytic Proton donor/acceptor. Residues 373-392 (FGTGPEKMDISGENEAQSSM) are disordered. Residues 477–487 (QRSMDAPSPGE) are important for specificity. Asp-481 serves as a coordination point for substrate.

This sequence belongs to the peptidase S12 family. As to quaternary structure, homodimer.

It catalyses the reaction Release of an N-terminal D-amino acid from a peptide, Xaa-|-Yaa-, in which Xaa is preferably D-Ala, D-Ser or D-Thr. D-amino acid amides and methyl esters also are hydrolyzed, as is glycine amide.. Its activity is regulated as follows. Inhibited by beta-lactam compounds such as 6-aminopenicillic acid, 7-aminocephalosporanic acid, benzylpenicillin and ampicillin. Inhibited by p-chloromercuribenzoate. Its function is as follows. Hydrolyzes N-terminal residues in D-amino acid-containing peptides. The protein is D-aminopeptidase of Brucella melitensis biotype 2 (strain ATCC 23457).